A 768-amino-acid chain; its full sequence is Post-transcriptional regulator MKT1 (768 aa).

The protein belongs to the XPG/RAD2 endonuclease family. As to quaternary structure, interacts with PBP1.

Its subcellular location is the cytoplasm. It is found in the cytosol. Functionally, involved in 3'-UTR mediated RNA regulation. Complexes with PBP1 to promote mRNA interactions with poly(A)-binding protein. The chain is Post-transcriptional regulator MKT1 from Cryptococcus neoformans var. grubii serotype A (strain H99 / ATCC 208821 / CBS 10515 / FGSC 9487) (Filobasidiella neoformans var. grubii).